The primary structure comprises 456 residues: Chromosomal replication initiator protein DnaA (456 aa).

Residues 1–79 (MSQEIWADVL…QHPQVSFQVL (79 aa)) are domain I, interacts with DnaA modulators. The interval 79–112 (LPASQDALLLPSDPPPAPISPGRAPAPPPADNRK) is domain II. Residues 89 to 112 (PSDPPPAPISPGRAPAPPPADNRK) form a disordered region. Positions 90-108 (SDPPPAPISPGRAPAPPPA) are enriched in pro residues. Residues 113–329 (TLNPKYTFEN…GALMRVVAFS (217 aa)) form a domain III, AAA+ region region. ATP is bound by residues Gly157, Gly159, Lys160, and Thr161. Residues 330-456 (SLNNVPFSRA…KGLEDEDSRA (127 aa)) form a domain IV, binds dsDNA region.

Belongs to the DnaA family. As to quaternary structure, oligomerizes as a right-handed, spiral filament on DNA at oriC.

Its subcellular location is the cytoplasm. In terms of biological role, plays an essential role in the initiation and regulation of chromosomal replication. ATP-DnaA binds to the origin of replication (oriC) to initiate formation of the DNA replication initiation complex once per cell cycle. Binds the DnaA box (a 9 base pair repeat at the origin) and separates the double-stranded (ds)DNA. Forms a right-handed helical filament on oriC DNA; dsDNA binds to the exterior of the filament while single-stranded (ss)DNA is stabiized in the filament's interior. The ATP-DnaA-oriC complex binds and stabilizes one strand of the AT-rich DNA unwinding element (DUE), permitting loading of DNA polymerase. After initiation quickly degrades to an ADP-DnaA complex that is not apt for DNA replication. Binds acidic phospholipids. The polypeptide is Chromosomal replication initiator protein DnaA (Deinococcus deserti (strain DSM 17065 / CIP 109153 / LMG 22923 / VCD115)).